Consider the following 224-residue polypeptide: UPF0502 protein Psyr_2419 (224 aa).

The protein belongs to the UPF0502 family.

In Pseudomonas syringae pv. syringae (strain B728a), this protein is UPF0502 protein Psyr_2419.